Reading from the N-terminus, the 46-residue chain is Peroxidase 1 (46 aa).

Belongs to the peroxidase family. Classical plant (class III) peroxidase subfamily. The cofactor is heme b. It depends on Ca(2+) as a cofactor.

The protein resides in the secreted. It carries out the reaction 2 a phenolic donor + H2O2 = 2 a phenolic radical donor + 2 H2O. Its function is as follows. Removal of H(2)O(2), oxidation of toxic reductants, biosynthesis and degradation of lignin, suberization, auxin catabolism, response to environmental stresses such as wounding, pathogen attack and oxidative stress. These functions might be dependent on each isozyme/isoform in each plant tissue. The chain is Peroxidase 1 from Catharanthus roseus (Madagascar periwinkle).